The following is a 193-amino-acid chain: Dual-action ribosomal maturation protein DarP (193 aa).

The protein belongs to the DarP family.

It localises to the cytoplasm. Member of a network of 50S ribosomal subunit biogenesis factors which assembles along the 30S-50S interface, preventing incorrect 23S rRNA structures from forming. Promotes peptidyl transferase center (PTC) maturation. The sequence is that of Dual-action ribosomal maturation protein DarP from Vibrio cholerae serotype O1 (strain ATCC 39315 / El Tor Inaba N16961).